Reading from the N-terminus, the 263-residue chain is Stress-response A/B barrel domain-containing protein UP3 (263 aa).

Stress-response A/B barrel domains follow at residues 49 to 142 (IEHI…AVDW) and 158 to 252 (VAKL…VVEF). The Peroxisomal targeting signal motif lies at 261-263 (SSL).

As to quaternary structure, homodimer.

The protein resides in the peroxisome. Its function is as follows. Involved in stress response. This chain is Stress-response A/B barrel domain-containing protein UP3, found in Arabidopsis thaliana (Mouse-ear cress).